Reading from the N-terminus, the 141-residue chain is Small ribosomal subunit protein bS6 (141 aa).

A disordered region spans residues 110–141 (SRTKVSDQPAAVEAAEAPAAPAAQEESAPASA). The segment covering 117-141 (QPAAVEAAEAPAAPAAQEESAPASA) has biased composition (low complexity).

Belongs to the bacterial ribosomal protein bS6 family.

Functionally, binds together with bS18 to 16S ribosomal RNA. In Acidobacterium capsulatum (strain ATCC 51196 / DSM 11244 / BCRC 80197 / JCM 7670 / NBRC 15755 / NCIMB 13165 / 161), this protein is Small ribosomal subunit protein bS6.